A 307-amino-acid chain; its full sequence is Agmatinase (307 aa).

6 residues coordinate Mn(2+): histidine 128, aspartate 151, histidine 153, aspartate 155, aspartate 232, and aspartate 234.

This sequence belongs to the arginase family. Agmatinase subfamily. It depends on Mn(2+) as a cofactor.

The catalysed reaction is agmatine + H2O = urea + putrescine. Its pathway is amine and polyamine biosynthesis; putrescine biosynthesis via agmatine pathway; putrescine from agmatine: step 1/1. Catalyzes the formation of putrescine from agmatine. The polypeptide is Agmatinase (Neisseria meningitidis serogroup C (strain 053442)).